The following is a 259-amino-acid chain: UPF0246 protein Rfer_2372 (259 aa).

Belongs to the UPF0246 family.

The polypeptide is UPF0246 protein Rfer_2372 (Albidiferax ferrireducens (strain ATCC BAA-621 / DSM 15236 / T118) (Rhodoferax ferrireducens)).